Reading from the N-terminus, the 132-residue chain is Small ribosomal subunit protein eS24 (132 aa).

Residues 91–132 are disordered; it reads LATHGLYEKKKTSRKQRTERQNRMKKVRSIKKASVGAAGKKN. Residues 96 to 112 show a composition bias toward basic and acidic residues; it reads LYEKKKTSRKQRTERQN.

The protein belongs to the eukaryotic ribosomal protein eS24 family. In terms of assembly, component of the small ribosomal subunit.

The protein resides in the cytoplasm. Component of the small ribosomal subunit. The ribosome is a large ribonucleoprotein complex responsible for the synthesis of proteins in the cell. Required for processing of pre-rRNA and maturation of 40S ribosomal subunits. The sequence is that of Small ribosomal subunit protein eS24 (rps24) from Oryzias latipes (Japanese rice fish).